Consider the following 280-residue polypeptide: MKRKKLVIGSILMGMTLSLSACGSSDNIVTTKSGSISESDFNKKLKENYGKQNLSEMVVEKVLHDKYKVTDEEVTKQLEELKDKMGDNFNTYMESNGVKNEDQLKEKLKLTFAFEKAIKATVTEKDIKDHYKPKLQVSHILVKDEKTAKEIKEKLNSGEDFAALAKQYSEDPGSKEKGGELSEFGPGMMVKEFEDAAYKLEVGQLSEPVKSSFGYHIIKLTDKKELKPYEEEKENIRKELEQQRIQDPQFHQQVTRDLLKNADIKVSDKDLKDTFKELEK.

Residues 1–21 (MKRKKLVIGSILMGMTLSLSA) form the signal peptide. Cysteine 22 is lipidated: N-palmitoyl cysteine. Cysteine 22 is lipidated: S-diacylglycerol cysteine. In terms of domain architecture, PpiC spans 132-222 (KPKLQVSHIL…FGYHIIKLTD (91 aa)).

This sequence belongs to the PrsA family.

The protein resides in the cell membrane. It catalyses the reaction [protein]-peptidylproline (omega=180) = [protein]-peptidylproline (omega=0). Plays a major role in protein secretion by helping the post-translocational extracellular folding of several secreted proteins. The sequence is that of Foldase protein PrsA 4 (prsA4) from Bacillus cereus (strain ATCC 14579 / DSM 31 / CCUG 7414 / JCM 2152 / NBRC 15305 / NCIMB 9373 / NCTC 2599 / NRRL B-3711).